A 144-amino-acid polypeptide reads, in one-letter code: Granulocyte-macrophage colony-stimulating factor (144 aa).

The signal sequence occupies residues 1–17; it reads MWLQNLLLLGTVVCSIS. O-linked (GalNAc...) serine glycosylation occurs at Ser24. O-linked (GalNAc...) threonine glycosylation occurs at Thr27. N-linked (GlcNAc...) asparagine glycans are attached at residues Asn44, Asn47, and Asn54. Disulfide bonds link Cys71/Cys113 and Cys105/Cys138.

It belongs to the GM-CSF family. Monomer. The signaling GM-CSF receptor complex is a dodecamer of two head-to-head hexamers of two alpha, two beta, and two ligand subunits.

It is found in the secreted. Its function is as follows. Cytokine that stimulates the growth and differentiation of hematopoietic precursor cells from various lineages, including granulocytes, macrophages, eosinophils and erythrocytes. This Sus scrofa (Pig) protein is Granulocyte-macrophage colony-stimulating factor (CSF2).